Consider the following 305-residue polypeptide: D-alanine--D-alanine ligase (305 aa).

The ATP-grasp domain maps to 105–300; that stretch reads KMIWQAAGIN…FDELVVQILE (196 aa). 131–186 is an ATP binding site; it reads ADRLGLPLIIKPAREGSTLGLNKVDNEQDFRSAYQAAAEYDSLVLAEQFIQGIELT. Residues Asp254, Glu267, and Asn269 each contribute to the Mg(2+) site.

This sequence belongs to the D-alanine--D-alanine ligase family. Mg(2+) serves as cofactor. Requires Mn(2+) as cofactor.

The protein localises to the cytoplasm. The enzyme catalyses 2 D-alanine + ATP = D-alanyl-D-alanine + ADP + phosphate + H(+). The protein operates within cell wall biogenesis; peptidoglycan biosynthesis. Its function is as follows. Cell wall formation. The sequence is that of D-alanine--D-alanine ligase from Nitrosomonas europaea (strain ATCC 19718 / CIP 103999 / KCTC 2705 / NBRC 14298).